We begin with the raw amino-acid sequence, 503 residues long: AMP phosphorylase (503 aa).

AMP-binding positions include glycine 168, 194–199 (SRAITS), and threonine 203. The active-site Proton donor is aspartate 256. Residues serine 264 and lysine 288 each coordinate AMP.

Belongs to the thymidine/pyrimidine-nucleoside phosphorylase family. Type 2 subfamily.

The enzyme catalyses AMP + phosphate = alpha-D-ribose 1,5-bisphosphate + adenine. The catalysed reaction is CMP + phosphate = cytosine + alpha-D-ribose 1,5-bisphosphate. It carries out the reaction UMP + phosphate = alpha-D-ribose 1,5-bisphosphate + uracil. In terms of biological role, catalyzes the conversion of AMP and phosphate to adenine and ribose 1,5-bisphosphate (R15P). Exhibits phosphorylase activity toward CMP and UMP in addition to AMP. Functions in an archaeal AMP degradation pathway, together with R15P isomerase and RubisCO. The chain is AMP phosphorylase from Pyrococcus furiosus (strain ATCC 43587 / DSM 3638 / JCM 8422 / Vc1).